The primary structure comprises 200 residues: HTH-type transcriptional regulator BetI (200 aa).

The HTH tetR-type domain maps to 8 to 68; that stretch reads SIRKQQLIQA…AAMRHIQYQL (61 aa). A DNA-binding region (H-T-H motif) is located at residues 31-50; the sequence is SIALIARKAGVSNGIISHYF.

It participates in amine and polyamine biosynthesis; betaine biosynthesis via choline pathway [regulation]. Its function is as follows. Repressor involved in the biosynthesis of the osmoprotectant glycine betaine. It represses transcription of the choline transporter BetT and the genes of BetAB involved in the synthesis of glycine betaine. This is HTH-type transcriptional regulator BetI from Proteus mirabilis (strain HI4320).